The sequence spans 274 residues: Formamidopyrimidine-DNA glycosylase (274 aa).

Catalysis depends on Pro2, which acts as the Schiff-base intermediate with DNA. Glu3 serves as the catalytic Proton donor. The active-site Proton donor; for beta-elimination activity is Lys58. His91, Arg110, and Lys152 together coordinate DNA. The FPG-type zinc-finger motif lies at 237-271 (KVYGRKNLPCLVCENKIETVVIAGRHSAFCPHCQP). Catalysis depends on Arg261, which acts as the Proton donor; for delta-elimination activity.

This sequence belongs to the FPG family. As to quaternary structure, monomer. It depends on Zn(2+) as a cofactor.

It catalyses the reaction Hydrolysis of DNA containing ring-opened 7-methylguanine residues, releasing 2,6-diamino-4-hydroxy-5-(N-methyl)formamidopyrimidine.. The catalysed reaction is 2'-deoxyribonucleotide-(2'-deoxyribose 5'-phosphate)-2'-deoxyribonucleotide-DNA = a 3'-end 2'-deoxyribonucleotide-(2,3-dehydro-2,3-deoxyribose 5'-phosphate)-DNA + a 5'-end 5'-phospho-2'-deoxyribonucleoside-DNA + H(+). Its function is as follows. Involved in base excision repair of DNA damaged by oxidation or by mutagenic agents. Acts as a DNA glycosylase that recognizes and removes damaged bases. Has a preference for oxidized purines, such as 7,8-dihydro-8-oxoguanine (8-oxoG). Has AP (apurinic/apyrimidinic) lyase activity and introduces nicks in the DNA strand. Cleaves the DNA backbone by beta-delta elimination to generate a single-strand break at the site of the removed base with both 3'- and 5'-phosphates. The polypeptide is Formamidopyrimidine-DNA glycosylase (Legionella pneumophila (strain Lens)).